A 257-amino-acid polypeptide reads, in one-letter code: Acetylglutamate kinase (257 aa).

Residues 43 to 44, arginine 65, and asparagine 157 each bind substrate; that span reads GG.

The protein belongs to the acetylglutamate kinase family. ArgB subfamily.

It localises to the cytoplasm. It carries out the reaction N-acetyl-L-glutamate + ATP = N-acetyl-L-glutamyl 5-phosphate + ADP. It functions in the pathway amino-acid biosynthesis; L-arginine biosynthesis; N(2)-acetyl-L-ornithine from L-glutamate: step 2/4. Its function is as follows. Catalyzes the ATP-dependent phosphorylation of N-acetyl-L-glutamate. The sequence is that of Acetylglutamate kinase from Actinobacillus succinogenes (strain ATCC 55618 / DSM 22257 / CCUG 43843 / 130Z).